An 889-amino-acid polypeptide reads, in one-letter code: Protein SEY1 homolog (889 aa).

At 1-801 the chain is on the cytoplasmic side; that stretch reads MDTKTQIIDY…ETGAKMSLKN (801 aa). The region spanning 31 to 277 is the GB1/RHD3-type G domain; that stretch reads GFNYNVIAIL…IPSDGFAHYC (247 aa). 41 to 48 is a GTP binding site; the sequence is GSQSSGKS. Residues 429 to 449 are disordered; that stretch reads RKDGKGGSSPSAGDKKDTKDT. The stretch at 679-699 forms a coiled coil; it reads LDEIMDVLKSKLDEISDNLSS. A helical membrane pass occupies residues 802 to 822; sequence VPLFFWVILLILGWNELLFFT. The Lumenal segment spans residues 823-825; it reads RFF. The helical transmembrane segment at 826–846 threads the bilayer; it reads FRLNIILPLFLAAAVILSTLV. Over 847–889 the chain is Cytoplasmic; that stretch reads FNGNMEVLSIINKAVFFLAKNSFGVYRQLQAMGGKAAQGAAAD.

Belongs to the TRAFAC class dynamin-like GTPase superfamily. GB1/RHD3 GTPase family. RHD3 subfamily.

The protein localises to the endoplasmic reticulum membrane. Its function is as follows. Probable GTP-binding protein involved in generating and maintaining the structure of the tubular endoplasmic reticulum network. This Plasmodium vivax (strain Salvador I) protein is Protein SEY1 homolog.